The primary structure comprises 474 residues: Solute carrier family 49 member A3 (474 aa).

The interval 1–20 (MEGESAETEPLIQSSSAADR) is disordered. The next 12 helical transmembrane spans lie at 38–58 (WFIL…WLTF), 69–89 (LCVS…AAVV), 105–126 (CSLI…CGVL), 134–154 (VFAV…LVIF), 175–195 (LASM…PLIV), 201–221 (LFLL…LATL), 258–278 (WILL…STLL), 290–310 (GFAG…AFLL), 326–346 (ICMC…QLPA), 349–369 (VLLV…YPVG), 388–408 (LIFT…QALA), and 428–448 (VPVL…VVFF).

The protein belongs to the major facilitator superfamily.

It is found in the membrane. The protein is Solute carrier family 49 member A3 (slc49a3) of Danio rerio (Zebrafish).